Here is a 139-residue protein sequence, read N- to C-terminus: Ribulose bisphosphate carboxylase small subunit (139 aa).

It belongs to the RuBisCO small chain family. In terms of assembly, heterohexadecamer of 8 large and 8 small subunits.

The protein localises to the plastid. Its subcellular location is the chloroplast. Its function is as follows. RuBisCO catalyzes two reactions: the carboxylation of D-ribulose 1,5-bisphosphate, the primary event in carbon dioxide fixation, as well as the oxidative fragmentation of the pentose substrate in the photorespiration process. Both reactions occur simultaneously and in competition at the same active site. Although the small subunit is not catalytic it is essential for maximal activity. The protein is Ribulose bisphosphate carboxylase small subunit of Guillardia theta (Cryptophyte).